Consider the following 328-residue polypeptide: MTVPIAIIGTGIAGLSAAQALTSAGHQVHLFDKSRGSGGRMSSKRSDAGSLDMGAQYFTARDRRFATAVKQWQAQGHVSEWTPLLYNFHGGRLSPSPDEQVRWVGEPGMSAITRAMRGDLPVSFSCRITDVFRGEQHWNLLDAEGENHGPFSHVIIATPAPQATALLAAAPKLASVVAGVKMDPTWAVALAFETPLQTPMQGCFVQDSPLDWLARNRSKPGRDDTLDSWVLHATSQWSRQNLDASREQVIEHLHGAFAELIDCAMPAPVFSLAHRWLYARPAGSHEWGALSDADLGIYVCGDWCLSGRVEGAWLSGQEAARRLLEHLQ.

FAD is bound by residues alanine 13, 32 to 33, arginine 40, and 56 to 57; these read DK and QY. Substrate contacts are provided by residues 57-61 and 96-98; these read YFTAR and SPD. Isoleucine 128 serves as a coordination point for FAD. Threonine 185 provides a ligand contact to substrate. Aspartate 302 provides a ligand contact to FAD. Arginine 308 lines the substrate pocket. Residue valine 309 coordinates FAD.

Belongs to the bacterial renalase family. The cofactor is FAD.

The enzyme catalyses 1,2-dihydro-beta-NAD + O2 + H(+) = H2O2 + NAD(+). It catalyses the reaction 1,2-dihydro-beta-NADP + O2 + H(+) = H2O2 + NADP(+). It carries out the reaction 1,6-dihydro-beta-NADP + O2 + H(+) = H2O2 + NADP(+). The catalysed reaction is 1,6-dihydro-beta-NAD + O2 + H(+) = H2O2 + NAD(+). Functionally, catalyzes the oxidation of the 1,2-dihydro- and 1,6-dihydro- isomeric forms of beta-NAD(P) back to beta-NAD(P)+. Has a preference for 1,2-dihydro-beta-NAD as substrate. May serve to protect primary metabolism dehydrogenases from inhibition by the 1,2-dihydro- and 1,6-dihydro-beta-NAD(P) isomers. The polypeptide is Renalase (Pseudomonas savastanoi pv. phaseolicola (strain 1448A / Race 6) (Pseudomonas syringae pv. phaseolicola (strain 1448A / Race 6))).